The sequence spans 393 residues: Chorismate synthase (393 aa).

The NADP(+) site is built by Arg48 and Arg54. FMN-binding positions include 125-127 (RSS), 238-239 (NA), Gly278, 293-297 (KPTSS), and Arg319. Residues 355 to 393 (ACTTPKIPGHTGPREGQEEGPSDSEPKVEFADDPEPDEA) are disordered.

It belongs to the chorismate synthase family. Homotetramer. Requires FMNH2 as cofactor.

The catalysed reaction is 5-O-(1-carboxyvinyl)-3-phosphoshikimate = chorismate + phosphate. It participates in metabolic intermediate biosynthesis; chorismate biosynthesis; chorismate from D-erythrose 4-phosphate and phosphoenolpyruvate: step 7/7. Functionally, catalyzes the anti-1,4-elimination of the C-3 phosphate and the C-6 proR hydrogen from 5-enolpyruvylshikimate-3-phosphate (EPSP) to yield chorismate, which is the branch point compound that serves as the starting substrate for the three terminal pathways of aromatic amino acid biosynthesis. This reaction introduces a second double bond into the aromatic ring system. The protein is Chorismate synthase of Nitrosospira multiformis (strain ATCC 25196 / NCIMB 11849 / C 71).